The primary structure comprises 66 residues: DNA-binding protein 7d (66 aa).

An N6-methyllysine; partial mark is found at lysine 5 and lysine 7.

It belongs to the 7 kDa DNA-binding/endoribonuclease P2 family. In terms of assembly, monomer. Post-translationally, lys-5 was 70% monomethylated in form 7a, 25% in form 7b, and 20% in form 7d. Lys-7 was 50% monomethylated in form 7a, 40% in form 7b, and 50% in form 7d.

The protein resides in the cytoplasm. Functionally, can constrain negative DNA supercoils. May be involved in maintaining the integrity of the genome at high temperature. This chain is DNA-binding protein 7d, found in Sulfolobus acidocaldarius (strain ATCC 33909 / DSM 639 / JCM 8929 / NBRC 15157 / NCIMB 11770).